Consider the following 291-residue polypeptide: Lipoyl synthase (291 aa).

[4Fe-4S] cluster contacts are provided by cysteine 43, cysteine 48, cysteine 54, cysteine 69, cysteine 73, cysteine 76, and serine 280. The 215-residue stretch at 55-269 folds into the Radical SAM core domain; that stretch reads FSSRTATFLI…AAYGRARGIP (215 aa).

Belongs to the radical SAM superfamily. Lipoyl synthase family. [4Fe-4S] cluster is required as a cofactor.

The protein localises to the cytoplasm. It carries out the reaction [[Fe-S] cluster scaffold protein carrying a second [4Fe-4S](2+) cluster] + N(6)-octanoyl-L-lysyl-[protein] + 2 oxidized [2Fe-2S]-[ferredoxin] + 2 S-adenosyl-L-methionine + 4 H(+) = [[Fe-S] cluster scaffold protein] + N(6)-[(R)-dihydrolipoyl]-L-lysyl-[protein] + 4 Fe(3+) + 2 hydrogen sulfide + 2 5'-deoxyadenosine + 2 L-methionine + 2 reduced [2Fe-2S]-[ferredoxin]. It participates in protein modification; protein lipoylation via endogenous pathway; protein N(6)-(lipoyl)lysine from octanoyl-[acyl-carrier-protein]: step 2/2. Functionally, catalyzes the radical-mediated insertion of two sulfur atoms into the C-6 and C-8 positions of the octanoyl moiety bound to the lipoyl domains of lipoate-dependent enzymes, thereby converting the octanoylated domains into lipoylated derivatives. The polypeptide is Lipoyl synthase (Oleidesulfovibrio alaskensis (strain ATCC BAA-1058 / DSM 17464 / G20) (Desulfovibrio alaskensis)).